We begin with the raw amino-acid sequence, 142 residues long: Putative regulator of rDNA transcription protein 16 (142 aa).

3 helical membrane passes run 19 to 39 (ILLTVLFGIGWATLDLPVMVA), 84 to 104 (FLLFIGLNTSPCVSETIAIFL), and 111 to 131 (SIFIATEYLFLILLPLRGLCH).

It localises to the membrane. In terms of biological role, identified in a screen for mutants with decreased levels of rDNA transcription. This chain is Putative regulator of rDNA transcription protein 16 (RRT16), found in Saccharomyces cerevisiae (strain ATCC 204508 / S288c) (Baker's yeast).